The chain runs to 310 residues: Oxygen-dependent coproporphyrinogen-III oxidase (310 aa).

Ser92 is a substrate binding site. A divalent metal cation is bound by residues His96 and His106. The Proton donor role is filled by His106. 108–110 is a substrate binding site; sequence NVR. 2 residues coordinate a divalent metal cation: His145 and His175. The important for dimerization stretch occupies residues 240-275; sequence YVEFNLIWDRGTLFGLQSGGRTESILMSMPPLARWE. 258–260 contributes to the substrate binding site; sequence GGR.

Belongs to the aerobic coproporphyrinogen-III oxidase family. In terms of assembly, homodimer. Requires a divalent metal cation as cofactor.

The protein resides in the cytoplasm. It carries out the reaction coproporphyrinogen III + O2 + 2 H(+) = protoporphyrinogen IX + 2 CO2 + 2 H2O. Its pathway is porphyrin-containing compound metabolism; protoporphyrin-IX biosynthesis; protoporphyrinogen-IX from coproporphyrinogen-III (O2 route): step 1/1. Involved in the heme biosynthesis. Catalyzes the aerobic oxidative decarboxylation of propionate groups of rings A and B of coproporphyrinogen-III to yield the vinyl groups in protoporphyrinogen-IX. The polypeptide is Oxygen-dependent coproporphyrinogen-III oxidase (Pectobacterium atrosepticum (strain SCRI 1043 / ATCC BAA-672) (Erwinia carotovora subsp. atroseptica)).